Here is a 340-residue protein sequence, read N- to C-terminus: Guanine nucleotide-binding protein G(I)/G(S)/G(T) subunit beta-2 (340 aa).

At Ser-2 the chain carries N-acetylserine. WD repeat units lie at residues 53 to 83, 95 to 125, 141 to 170, 182 to 212, 224 to 254, 268 to 298, and 310 to 340; these read GHLAKIYAMHWGTDSRLLVSASQDGKLIIWD, LRSSWVMTCAYAPSGNFVACGGLDNICSIYS, GHTGYLSCCRFLDDNQIITSSGDTTCALWD, GHSGDVMSLSLAPDGRTFVSGACDASIKLWD, GHESDINAVAFFPNGYAFTTGSDDATCRLFD, NIICGITSVAFSRSGRLLLAGYDDFNCNIWD, and GHDNRVSCLGVTDDGMAVATGSWDSFLKIWN. Position 239 is a phosphotyrosine (Tyr-239).

Belongs to the WD repeat G protein beta family. As to quaternary structure, g proteins are composed of 3 units, alpha, beta and gamma. In this context, interacts with GNAI2 and GNG2. Interacts with ARHGEF18 and RASD2. Interacts with ATXN10. Interacts with SCN8A. Expressed in all cardiac subcompartments and in the brain, with highest levels in the atrioventricular node and brain.

The protein localises to the cytoplasm. The protein resides in the perinuclear region. It is found in the cell membrane. In terms of biological role, guanine nucleotide-binding proteins (G proteins) are involved as a modulator or transducer in various transmembrane signaling systems. The beta and gamma chains are required for the GTPase activity, for replacement of GDP by GTP, and for G protein-effector interaction. The sequence is that of Guanine nucleotide-binding protein G(I)/G(S)/G(T) subunit beta-2 (GNB2) from Homo sapiens (Human).